A 132-amino-acid polypeptide reads, in one-letter code: Small ribosomal subunit protein uS8 (132 aa).

Belongs to the universal ribosomal protein uS8 family. In terms of assembly, part of the 30S ribosomal subunit. Contacts proteins S5 and S12.

Its function is as follows. One of the primary rRNA binding proteins, it binds directly to 16S rRNA central domain where it helps coordinate assembly of the platform of the 30S subunit. In Clostridium tetani (strain Massachusetts / E88), this protein is Small ribosomal subunit protein uS8.